Consider the following 318-residue polypeptide: Oxidoreductase swnN (318 aa).

Belongs to the NmrA-type oxidoreductase family. Isoflavone reductase subfamily.

It functions in the pathway mycotoxin biosynthesis. Functionally, aminotransferase; part of the gene cluster that mediates the biosynthesis of swainsonine (SW), a cytotoxic fungal alkaloid and a potential cancer therapy drug. Swainsonine production occurs via a multibranched pathway and is dispensable for fungal colonization of plants and infection of insect hosts. The first step of swainsonine biosynthesis is the production of the precursor pipecolic acid (PA) via conversion of L-lysine (Lys) to 1-piperideine-6-carboxylate (P6C) by the aminotransferase swnA, the latter being further reduced to PA by the reductase swnR. The PKS-NRPS hybrid synthetase swnK uptakes and condensates PA and malonyl-CoA with and without skipping of the ketoreductase (KR) domain in order to produce 3 intermediates, 1-oxoindolizidine, (1S)-1-hydroxyindolizin, and (1R)-1-hydroxyindolizine; with the transisomer (1S)-1-hydroxyindolizin being predominant. The terminal thioester reductase (TE) domain of swnK is involved in reduction of the thioester bond to release the intermediate aldehydes. The oxidoreductase swnN could contribute to the reduction of 1-oxoindolizidine to (1S)-1-hydroxyindolizin and (1R)-1-hydroxyindolizine, contributing to the major route of SW production. The dioxygenase swnH2 would be responsible for the oxidization of (1R)-1-hydroxyindolizine into (1R,2S)-1,2-dihydroxyindolizine and of (1S)-1-hydroxyindolizin to yield both (1R,2S)-1,2-dihydroxyindolizine and (1S,2S)-1,2-dihydroxyindolizine. The dioxygenase swnH1 then performs the conversion of the 1,2-dihydroxyindolizine epimers to SW. This chain is Oxidoreductase swnN, found in Arthroderma benhamiae (strain ATCC MYA-4681 / CBS 112371) (Trichophyton mentagrophytes).